A 294-amino-acid chain; its full sequence is Metallophosphoesterase MPPED2 (294 aa).

Residues Asp65, His67, Asp86, Asn117, and His213 each coordinate Mn(2+). Residue 117–118 (NH) participates in GMP binding. Residues 225 to 226 (KE) and 252 to 255 (GIHE) each bind GMP. Residue His254 participates in Mn(2+) binding.

It belongs to the UPF0046 family. Homodimer. Requires Mn(2+) as cofactor. Co(2+) is required as a cofactor. Expressed predominantly in fetal brain.

With respect to regulation, inhibited by nmolar levels of AMP and GMP. Displays low metallophosphoesterase activity (in vitro). May play a role in the development of the nervous system. In Homo sapiens (Human), this protein is Metallophosphoesterase MPPED2 (MPPED2).